A 215-amino-acid chain; its full sequence is Glutathione S-transferase D2 (215 aa).

The GST N-terminal domain maps to 1-80 (MDFYYMPGGG…YLVEKYGKDD (80 aa)). Glutathione is bound by residues 50–52 (HTI) and 64–66 (ESR). One can recognise a GST C-terminal domain in the interval 86–212 (DPKKRAVINQ…MKALFDARKL (127 aa)).

Belongs to the GST superfamily. Delta family. In terms of assembly, homodimer.

The enzyme catalyses RX + glutathione = an S-substituted glutathione + a halide anion + H(+). Conjugation of reduced glutathione to a wide number of exogenous and endogenous hydrophobic electrophiles. May be involved in detoxification. The polypeptide is Glutathione S-transferase D2 (Drosophila melanogaster (Fruit fly)).